The sequence spans 401 residues: tRNA(Met) cytidine acetate ligase (401 aa).

ATP contacts are provided by residues 7–20, G101, N160, and 185–186; these read IVEYNPFHNGHLYH and RI.

The protein belongs to the TmcAL family.

Its subcellular location is the cytoplasm. It catalyses the reaction cytidine(34) in elongator tRNA(Met) + acetate + ATP = N(4)-acetylcytidine(34) in elongator tRNA(Met) + AMP + diphosphate. Functionally, catalyzes the formation of N(4)-acetylcytidine (ac(4)C) at the wobble position of elongator tRNA(Met), using acetate and ATP as substrates. First activates an acetate ion to form acetyladenylate (Ac-AMP) and then transfers the acetyl group to tRNA to form ac(4)C34. The chain is tRNA(Met) cytidine acetate ligase from Geobacillus sp. (strain WCH70).